The sequence spans 351 residues: Lipoyl synthase (351 aa).

Positions 1 to 10 (MNDSGNSSKV) are enriched in polar residues. Residues 1–27 (MNDSGNSSKVNVRPPSAGLGAPSPGKR) form a disordered region. Over residues 14–24 (PPSAGLGAPSP) the composition is skewed to low complexity. Positions 74, 79, 85, 100, 104, 107, and 311 each coordinate [4Fe-4S] cluster. Positions 86–300 (WEDREATFLI…KEQAKEIGFS (215 aa)) constitute a Radical SAM core domain.

Belongs to the radical SAM superfamily. Lipoyl synthase family. Requires [4Fe-4S] cluster as cofactor.

Its subcellular location is the cytoplasm. It catalyses the reaction [[Fe-S] cluster scaffold protein carrying a second [4Fe-4S](2+) cluster] + N(6)-octanoyl-L-lysyl-[protein] + 2 oxidized [2Fe-2S]-[ferredoxin] + 2 S-adenosyl-L-methionine + 4 H(+) = [[Fe-S] cluster scaffold protein] + N(6)-[(R)-dihydrolipoyl]-L-lysyl-[protein] + 4 Fe(3+) + 2 hydrogen sulfide + 2 5'-deoxyadenosine + 2 L-methionine + 2 reduced [2Fe-2S]-[ferredoxin]. It functions in the pathway protein modification; protein lipoylation via endogenous pathway; protein N(6)-(lipoyl)lysine from octanoyl-[acyl-carrier-protein]: step 2/2. Functionally, catalyzes the radical-mediated insertion of two sulfur atoms into the C-6 and C-8 positions of the octanoyl moiety bound to the lipoyl domains of lipoate-dependent enzymes, thereby converting the octanoylated domains into lipoylated derivatives. The sequence is that of Lipoyl synthase from Tropheryma whipplei (strain TW08/27) (Whipple's bacillus).